The sequence spans 211 residues: MAEQHGAPEQAAAGKSHGDLGGSYKVILYELENFQGKRCELSAECPSLTDSLLEKVGSIQVESGPWLAFESRAFRGEQFVLEKGDYPRWDAWSNSRDSDSLLSLRPLNIDSPHHKLHLFENPAFSGRKMEIVDDDVPSLWAHGFQDRVASVRAINGTWVGYEFPGYRGRQYVFERGEYRHWNEWDASQPQLQSVRRIRDQKWHKRGRFPSS.

An N-acetylmethionine modification is found at Met1. Ala2 is modified (N-acetylalanine; in Beta-crystallin B3, N-terminally processed). The N-terminal arm stretch occupies residues 2-23 (AEQHGAPEQAAAGKSHGDLGGS). 2 Beta/gamma crystallin 'Greek key' domains span residues 24–63 (YKVI…QVES) and 64–108 (GPWL…RPLN). Positions 109–113 (IDSPH) are connecting peptide. 2 Beta/gamma crystallin 'Greek key' domains span residues 114-155 (HKLH…RAIN) and 156-198 (GTWV…RRIR). Residues 200–211 (QKWHKRGRFPSS) are C-terminal arm.

This sequence belongs to the beta/gamma-crystallin family. In terms of assembly, homo/heterodimer, or complexes of higher-order. The structure of beta-crystallin oligomers seems to be stabilized through interactions between the N-terminal arms.

Crystallins are the dominant structural components of the vertebrate eye lens. This Homo sapiens (Human) protein is Beta-crystallin B3 (CRYBB3).